Consider the following 459-residue polypeptide: Cysteine--tRNA ligase (459 aa).

Cysteine 28 provides a ligand contact to Zn(2+). Positions 30–40 (VTIYDLCHIGH) match the 'HIGH' region motif. Zn(2+)-binding residues include cysteine 209, histidine 234, and glutamate 238. Residues 266–270 (KMSKS) carry the 'KMSKS' region motif. Lysine 269 contributes to the ATP binding site.

Belongs to the class-I aminoacyl-tRNA synthetase family. In terms of assembly, monomer. Zn(2+) is required as a cofactor.

Its subcellular location is the cytoplasm. It carries out the reaction tRNA(Cys) + L-cysteine + ATP = L-cysteinyl-tRNA(Cys) + AMP + diphosphate. The chain is Cysteine--tRNA ligase from Vibrio cholerae serotype O1 (strain ATCC 39541 / Classical Ogawa 395 / O395).